The primary structure comprises 401 residues: uncharacterized protein (401 aa).

Cysteine 7, cysteine 13, cysteine 16, and cysteine 94 together coordinate [4Fe-4S] cluster. Positions 230, 259, 280, and 328 each coordinate S-adenosyl-L-methionine. The active-site Nucleophile is cysteine 355.

It belongs to the class I-like SAM-binding methyltransferase superfamily. RNA M5U methyltransferase family.

This is an uncharacterized protein from Chlamydia pneumoniae (Chlamydophila pneumoniae).